The primary structure comprises 838 residues: Protein translocase subunit SecA (838 aa).

Residues glutamine 87, 105 to 109 (GEGKT), and aspartate 494 each bind ATP. Composition is skewed to basic and acidic residues over residues 781 to 790 (EQEFQHKDET) and 803 to 819 (EDAK…KVGR). The tract at residues 781–838 (EQEFQHKDETANVQYSGPAESAEDAKKEPKRREAPKVGRNDPCPCGSGKKYKKCHGAK) is disordered. Cysteine 823, cysteine 825, cysteine 834, and histidine 835 together coordinate Zn(2+). Over residues 829–838 (KKYKKCHGAK) the composition is skewed to basic residues.

This sequence belongs to the SecA family. In terms of assembly, monomer and homodimer. Part of the essential Sec protein translocation apparatus which comprises SecA, SecYEG and auxiliary proteins SecDF-YajC and YidC. Zn(2+) serves as cofactor.

The protein resides in the cell inner membrane. It localises to the cytoplasm. It carries out the reaction ATP + H2O + cellular proteinSide 1 = ADP + phosphate + cellular proteinSide 2.. Functionally, part of the Sec protein translocase complex. Interacts with the SecYEG preprotein conducting channel. Has a central role in coupling the hydrolysis of ATP to the transfer of proteins into and across the cell membrane, serving as an ATP-driven molecular motor driving the stepwise translocation of polypeptide chains across the membrane. The protein is Protein translocase subunit SecA of Solidesulfovibrio magneticus (strain ATCC 700980 / DSM 13731 / RS-1) (Desulfovibrio magneticus).